A 127-amino-acid chain; its full sequence is Glycine cleavage system H protein (127 aa).

In terms of domain architecture, Lipoyl-binding spans 24–105 (TALVGITDFA…YGSGWMVKMK (82 aa)). Lys-65 is subject to N6-lipoyllysine.

This sequence belongs to the GcvH family. The glycine cleavage system is composed of four proteins: P, T, L and H. It depends on (R)-lipoate as a cofactor.

Functionally, the glycine cleavage system catalyzes the degradation of glycine. The H protein shuttles the methylamine group of glycine from the P protein to the T protein. The polypeptide is Glycine cleavage system H protein (Chlorobium luteolum (strain DSM 273 / BCRC 81028 / 2530) (Pelodictyon luteolum)).